The sequence spans 326 residues: N-acetyl-gamma-glutamyl-phosphate reductase (326 aa).

Residue cysteine 155 is part of the active site.

The protein belongs to the NAGSA dehydrogenase family. Type 1 subfamily.

The protein resides in the cytoplasm. It catalyses the reaction N-acetyl-L-glutamate 5-semialdehyde + phosphate + NADP(+) = N-acetyl-L-glutamyl 5-phosphate + NADPH + H(+). The protein operates within amino-acid biosynthesis; L-arginine biosynthesis; N(2)-acetyl-L-ornithine from L-glutamate: step 3/4. Functionally, catalyzes the NADPH-dependent reduction of N-acetyl-5-glutamyl phosphate to yield N-acetyl-L-glutamate 5-semialdehyde. The chain is N-acetyl-gamma-glutamyl-phosphate reductase from Shewanella sediminis (strain HAW-EB3).